We begin with the raw amino-acid sequence, 473 residues long: Photosystem II CP43 reaction center protein (473 aa).

A propeptide spanning residues 1 to 14 (MKTLYSLRRFYHVE) is cleaved from the precursor. N-acetylthreonine is present on threonine 15. Threonine 15 carries the phosphothreonine modification. The next 5 membrane-spanning stretches (helical) occupy residues 69–93 (LFEVAHFVPEKPMYEQGLILLPHLA), 134–155 (LLGPETLEESFPFFGYVWKDRN), 178–200 (KAFYFGGIYDTWAPGGGDVRKIT), 255–275 (KPFAWARRALVWSGEAYLSYS), and 291–312 (WFNNTAYPSEFYGPTGPEASQA). Position 367 (glutamate 367) interacts with [CaMn4O5] cluster. Residues 447–471 (RARAAAAGFEKGIDRDFEPVLSMTP) form a helical membrane-spanning segment.

It belongs to the PsbB/PsbC family. PsbC subfamily. As to quaternary structure, PSII is composed of 1 copy each of membrane proteins PsbA, PsbB, PsbC, PsbD, PsbE, PsbF, PsbH, PsbI, PsbJ, PsbK, PsbL, PsbM, PsbT, PsbX, PsbY, PsbZ, Psb30/Ycf12, at least 3 peripheral proteins of the oxygen-evolving complex and a large number of cofactors. It forms dimeric complexes. The cofactor is Binds multiple chlorophylls and provides some of the ligands for the Ca-4Mn-5O cluster of the oxygen-evolving complex. It may also provide a ligand for a Cl- that is required for oxygen evolution. PSII binds additional chlorophylls, carotenoids and specific lipids..

Its subcellular location is the plastid. The protein localises to the chloroplast thylakoid membrane. In terms of biological role, one of the components of the core complex of photosystem II (PSII). It binds chlorophyll and helps catalyze the primary light-induced photochemical processes of PSII. PSII is a light-driven water:plastoquinone oxidoreductase, using light energy to abstract electrons from H(2)O, generating O(2) and a proton gradient subsequently used for ATP formation. This chain is Photosystem II CP43 reaction center protein, found in Pisum sativum (Garden pea).